A 381-amino-acid polypeptide reads, in one-letter code: Homoserine O-acetyltransferase (381 aa).

The 313-residue stretch at 47–359 (NAILICHALT…DKGHDAFLLD (313 aa)) folds into the AB hydrolase-1 domain. Catalysis depends on S153, which acts as the Nucleophile. Position 223 (R223) interacts with substrate. Residues D320 and H353 contribute to the active site. D354 contacts substrate.

Belongs to the AB hydrolase superfamily. MetX family. Homodimer.

It is found in the cytoplasm. It catalyses the reaction L-homoserine + acetyl-CoA = O-acetyl-L-homoserine + CoA. It participates in amino-acid biosynthesis; L-methionine biosynthesis via de novo pathway; O-acetyl-L-homoserine from L-homoserine: step 1/1. Functionally, transfers an acetyl group from acetyl-CoA to L-homoserine, forming acetyl-L-homoserine. In Acidiphilium cryptum (strain JF-5), this protein is Homoserine O-acetyltransferase.